The chain runs to 329 residues: Probable tyrosine--tRNA ligase, cytoplasmic (329 aa).

An L-tyrosine-binding site is contributed by Tyr35. Positions 40–48 (TTGKPHIAY) match the 'HIGH' region motif. L-tyrosine is bound by residues Tyr162, Gln166, Asp169, and Gln184. The 'KMSKS' region motif lies at 218–222 (KMSSS).

The protein belongs to the class-I aminoacyl-tRNA synthetase family. As to quaternary structure, homodimer.

The protein localises to the cytoplasm. It carries out the reaction tRNA(Tyr) + L-tyrosine + ATP = L-tyrosyl-tRNA(Tyr) + AMP + diphosphate + H(+). This is Probable tyrosine--tRNA ligase, cytoplasmic from Vairimorpha ceranae (strain BRL01) (Microsporidian parasite).